The primary structure comprises 355 residues: Phosphoribosylformylglycinamidine cyclo-ligase (355 aa).

This sequence belongs to the AIR synthase family.

It localises to the cytoplasm. It catalyses the reaction 2-formamido-N(1)-(5-O-phospho-beta-D-ribosyl)acetamidine + ATP = 5-amino-1-(5-phospho-beta-D-ribosyl)imidazole + ADP + phosphate + H(+). Its pathway is purine metabolism; IMP biosynthesis via de novo pathway; 5-amino-1-(5-phospho-D-ribosyl)imidazole from N(2)-formyl-N(1)-(5-phospho-D-ribosyl)glycinamide: step 2/2. This Paraburkholderia xenovorans (strain LB400) protein is Phosphoribosylformylglycinamidine cyclo-ligase.